Here is a 236-residue protein sequence, read N- to C-terminus: Protein-L-isoaspartate O-methyltransferase 1 (236 aa).

Serine 86 is a catalytic residue.

Belongs to the methyltransferase superfamily. L-isoaspartyl/D-aspartyl protein methyltransferase family.

The protein localises to the cytoplasm. The catalysed reaction is [protein]-L-isoaspartate + S-adenosyl-L-methionine = [protein]-L-isoaspartate alpha-methyl ester + S-adenosyl-L-homocysteine. Functionally, catalyzes the methyl esterification of L-isoaspartyl residues in peptides and proteins that result from spontaneous decomposition of normal L-aspartyl and L-asparaginyl residues. It plays a role in the repair and/or degradation of damaged proteins. This is Protein-L-isoaspartate O-methyltransferase 1 from Nitrosospira multiformis (strain ATCC 25196 / NCIMB 11849 / C 71).